The following is a 601-amino-acid chain: ATP-dependent lipid A-core flippase (601 aa).

6 helical membrane-spanning segments follow: residues 35-55 (FAVA…LAFL), 77-97 (LAII…AILM), 150-170 (AVTS…VIFY), 173-193 (WQLA…IAKF), 263-283 (MEFL…YQVI), and 286-306 (SSTP…YEPV). One can recognise an ABC transmembrane type-1 domain in the interval 36-318 (AVAMVCMLIA…LTNVNNTIQQ (283 aa)). The region spanning 352–585 (IEIRNISFAY…RGEYYKLHQL (234 aa)) is the ABC transporter domain. 384 to 391 (GMSGGGKT) is an ATP binding site.

This sequence belongs to the ABC transporter superfamily. Lipid exporter (TC 3.A.1.106) family. Homodimer.

The protein localises to the cell inner membrane. The enzyme catalyses ATP + H2O + lipid A-core oligosaccharideSide 1 = ADP + phosphate + lipid A-core oligosaccharideSide 2.. In terms of biological role, involved in lipopolysaccharide (LPS) biosynthesis. Translocates lipid A-core from the inner to the outer leaflet of the inner membrane. Transmembrane domains (TMD) form a pore in the inner membrane and the ATP-binding domain (NBD) is responsible for energy generation. In Syntrophus aciditrophicus (strain SB), this protein is ATP-dependent lipid A-core flippase.